A 176-amino-acid polypeptide reads, in one-letter code: NAD(P)H-quinone oxidoreductase subunit I, chloroplastic (176 aa).

2 consecutive 4Fe-4S ferredoxin-type domains span residues 55–84 (GRIH…VDWE) and 95–124 (LNYS…MTEE). [4Fe-4S] cluster-binding residues include C64, C67, C70, C74, C104, C107, C110, and C114.

This sequence belongs to the complex I 23 kDa subunit family. NDH is composed of at least 16 different subunits, 5 of which are encoded in the nucleus. It depends on [4Fe-4S] cluster as a cofactor.

It localises to the plastid. The protein localises to the chloroplast thylakoid membrane. The enzyme catalyses a plastoquinone + NADH + (n+1) H(+)(in) = a plastoquinol + NAD(+) + n H(+)(out). The catalysed reaction is a plastoquinone + NADPH + (n+1) H(+)(in) = a plastoquinol + NADP(+) + n H(+)(out). Its function is as follows. NDH shuttles electrons from NAD(P)H:plastoquinone, via FMN and iron-sulfur (Fe-S) centers, to quinones in the photosynthetic chain and possibly in a chloroplast respiratory chain. The immediate electron acceptor for the enzyme in this species is believed to be plastoquinone. Couples the redox reaction to proton translocation, and thus conserves the redox energy in a proton gradient. The protein is NAD(P)H-quinone oxidoreductase subunit I, chloroplastic of Populus alba (White poplar).